A 1499-amino-acid chain; its full sequence is Rho GTPase-activating protein 35 (1499 aa).

The interval 1-266 is has GTPase activity, required for proper localization; the sequence is MMMARKQDVR…IPYFEALKQQ (266 aa). Residues K28, 33-37, L52, S56, 95-97, 201-203, and 229-231 contribute to the GTP site; these read IGKSC, EQT, KCD, and SAR. FF domains are found at residues 270 to 327, 368 to 422, 429 to 483, and 485 to 550; these read IATA…HIHR, KLLE…HLEK, RAEM…HQKQ, and IDRA…HIHF. A Phosphotyrosine modification is found at Y308. S589 bears the Phosphoserine mark. The pG1 pseudoGTPase domain occupies 592–767; it reads DPNIDRINLV…LLDSKRNLNL (176 aa). Phosphoserine is present on residues S770 and S773. A pG2 pseudoGTPase domain is found at 783 to 947; the sequence is RIVMCLMCGD…FKDVVEKKNI (165 aa). Phosphoserine is present on residues S970, S975, S985, and S1072. Residue Y1087 is modified to Phosphotyrosine. Y1105 is subject to Phosphotyrosine; by ABL2 and PTK6. Positions 1124 to 1141 are enriched in polar residues; sequence KAQSNGSGNGSDSEMDTS. The tract at residues 1124-1148 is disordered; sequence KAQSNGSGNGSDSEMDTSSLERGRK. 6 positions are modified to phosphoserine: S1134, S1142, S1150, S1176, S1179, and S1221. The disordered stretch occupies residues 1177-1207; sequence VGSDDELGPIRKKEEDQASQGYKGDNAVIPY. Residues 1213–1236 are required for phospholipid binding and regulation of the substrate preference; the sequence is PRRRNILRSLRRNTKKPKPKPRPS. T1226 is modified (phosphothreonine). S1236 is modified (phosphoserine). A Rho-GAP domain is found at 1249–1436; it reads VPLTTVVTPE…LFIQQCPFFF (188 aa). The interval 1446–1499 is disordered; the sequence is GAAPGSPSAMAPTVPFLTSTPATSQPSPPQSPPPTPQSPMQPLLSSQLQAEHTL. The span at 1448–1470 shows a compositional bias: low complexity; that stretch reads APGSPSAMAPTVPFLTSTPATSQ. Pro residues predominate over residues 1471 to 1484; that stretch reads PSPPQSPPPTPQSP. Phosphoserine occurs at positions 1472 and 1476. A Phosphothreonine modification is found at T1480. A Phosphoserine modification is found at S1483. Over residues 1485–1499 the composition is skewed to low complexity; the sequence is MQPLLSSQLQAEHTL.

As to quaternary structure, interacts with RASA1. Interacts with the general transcription factor GTF2I, the interaction sequesters GTF2I in the cytoplasm. In terms of processing, phosphorylation of Tyr-1105 by PTK6 promotes the association with RASA1, inactivating RHOA while activating RAS. Phosphorylation at Tyr-308 by PDGFRA inhibits binding to GTF2I. Phosphorylated by PRKCA at Ser-1221 and Thr-1226, induces relocalization from the cytoplasm to regions of plasma membrane ruffling and prevents the binding and substrate specificity regulation by phospholipids. In brain, phosphorylated by FYN and SRC. During focal adhesion formation, phosphorylated by MAPK1 and MAPK3 at the C-terminal region, probably at Ser-1451, Ser-1476, Thr-1480 and Ser-1483. Phosphorylation by MAPK1 and MAPK3 inhibits GAP function and localizes ARGHAP35 away from newly forming focal adhesions and stress fibers in cells spreading on fibronectin. Phosphorylation at Ser-1476 and Thr-1480 by GSK3B requires priming by MAPK and inhibits RhoGAP activity and modulates polarized cell migration. Ubiquitously expressed.

It is found in the cytoplasm. The protein resides in the cytoskeleton. It localises to the cilium basal body. The protein localises to the nucleus. Its subcellular location is the cell membrane. Its function is as follows. Rho GTPase-activating protein (GAP). Binds several acidic phospholipids which inhibits the Rho GAP activity to promote the Rac GAP activity. This binding is inhibited by phosphorylation by PRKCA. Involved in cell differentiation as well as cell adhesion and migration, plays an important role in retinal tissue morphogenesis, neural tube fusion, midline fusion of the cerebral hemispheres and mammary gland branching morphogenesis. Transduces signals from p21-ras to the nucleus, acting via the ras GTPase-activating protein (GAP). Transduces SRC-dependent signals from cell-surface adhesion molecules, such as laminin, to promote neurite outgrowth. Regulates axon outgrowth, guidance and fasciculation. Modulates Rho GTPase-dependent F-actin polymerization, organization and assembly, is involved in polarized cell migration and in the positive regulation of ciliogenesis and cilia elongation. During mammary gland development, is required in both the epithelial and stromal compartments for ductal outgrowth. Represses transcription of the glucocorticoid receptor by binding to the cis-acting regulatory sequence 5'-GAGAAAAGAAACTGGAGAAACTC-3'; this function is however unclear and would need additional experimental evidences. This is Rho GTPase-activating protein 35 from Rattus norvegicus (Rat).